The chain runs to 651 residues: Ion-translocating oxidoreductase complex subunit C (651 aa).

4Fe-4S ferredoxin-type domains follow at residues 368 to 398 and 408 to 437; these read EYAE…QQLY and KSEE…IQYF. Residues Cys-378, Cys-381, Cys-384, Cys-388, Cys-417, Cys-420, Cys-423, and Cys-427 each contribute to the [4Fe-4S] cluster site. Basic and acidic residues-rich tracts occupy residues 465-477 and 485-513; these read QARM…ERKA and ARRE…KANE. 2 disordered regions span residues 465 to 565 and 583 to 624; these read QARM…QPTD and LAQA…DPKK. Composition is skewed to polar residues over residues 554–564 and 587–600; these read VENQEQQTQPT and NSTS…QTAE. A compositionally biased stretch (basic and acidic residues) spans 602–614; it reads EVEKTKSAVEKTQ.

Belongs to the 4Fe4S bacterial-type ferredoxin family. RnfC subfamily. In terms of assembly, the complex is composed of six subunits: RnfA, RnfB, RnfC, RnfD, RnfE and RnfG. [4Fe-4S] cluster serves as cofactor.

The protein resides in the cell inner membrane. Its function is as follows. Part of a membrane-bound complex that couples electron transfer with translocation of ions across the membrane. In Haemophilus influenzae (strain PittEE), this protein is Ion-translocating oxidoreductase complex subunit C.